A 313-amino-acid polypeptide reads, in one-letter code: Cyclin-dependent kinase B2-1 (313 aa).

Methionine 1 carries the N-acetylmethionine modification. The region spanning 14-304 (FEKLEKVGEG…AKMAMEHPYF (291 aa)) is the Protein kinase domain. ATP contacts are provided by residues 20 to 28 (VGEGTYGKV) and lysine 43. At tyrosine 25 the chain carries Phosphotyrosine. The active-site Proton acceptor is the aspartate 145. Position 179 is a phosphothreonine (threonine 179).

Belongs to the protein kinase superfamily. CMGC Ser/Thr protein kinase family. CDC2/CDKX subfamily. In terms of assembly, interacts with CYCD4-1 and CKS1. In terms of tissue distribution, expressed in root tips, shoot apical meristem, leaf primordia vascular tissues and tapetum of anthers.

It carries out the reaction L-seryl-[protein] + ATP = O-phospho-L-seryl-[protein] + ADP + H(+). The enzyme catalyses L-threonyl-[protein] + ATP = O-phospho-L-threonyl-[protein] + ADP + H(+). The catalysed reaction is [DNA-directed RNA polymerase] + ATP = phospho-[DNA-directed RNA polymerase] + ADP + H(+). The chain is Cyclin-dependent kinase B2-1 (CDKB2-1) from Arabidopsis thaliana (Mouse-ear cress).